The sequence spans 898 residues: Neutral alpha-glucosidase C (898 aa).

A disordered region spans residues 154–173; it reads QRATKGNGQNTPAATSQENQ. Positions 157–171 are enriched in polar residues; the sequence is TKGNGQNTPAATSQE. Catalysis depends on Asp-495, which acts as the Nucleophile. Glu-498 is an active-site residue. The Proton donor role is filled by Asp-571.

It belongs to the glycosyl hydrolase 31 family.

The enzyme catalyses Hydrolysis of terminal, non-reducing (1-&gt;4)-linked alpha-D-glucose residues with release of alpha-D-glucose.. Functionally, has alpha-glucosidase activity. The chain is Neutral alpha-glucosidase C (Ganc) from Mus musculus (Mouse).